We begin with the raw amino-acid sequence, 177 residues long: Adenine phosphoribosyltransferase (177 aa).

The protein belongs to the purine/pyrimidine phosphoribosyltransferase family. In terms of assembly, homodimer.

Its subcellular location is the cytoplasm. The catalysed reaction is AMP + diphosphate = 5-phospho-alpha-D-ribose 1-diphosphate + adenine. Its pathway is purine metabolism; AMP biosynthesis via salvage pathway; AMP from adenine: step 1/1. In terms of biological role, catalyzes a salvage reaction resulting in the formation of AMP, that is energically less costly than de novo synthesis. This chain is Adenine phosphoribosyltransferase, found in Chlorobium limicola (strain DSM 245 / NBRC 103803 / 6330).